A 649-amino-acid polypeptide reads, in one-letter code: Endoglucanase D (649 aa).

The N-terminal stretch at 1 to 41 is a signal peptide; sequence MSRMTLKSSMKKRVLSLLIAVVFLSLTGVFPSGLIETKVSA. Catalysis depends on D201, which acts as the Nucleophile. Catalysis depends on residues H516 and D546. E555 functions as the Proton donor in the catalytic mechanism. In terms of domain architecture, Dockerin spans 579–649; the sequence is NEVLYGDVND…LIRVIEKLPI (71 aa).

Belongs to the glycosyl hydrolase 9 (cellulase E) family. Ca(2+) is required as a cofactor.

It catalyses the reaction Endohydrolysis of (1-&gt;4)-beta-D-glucosidic linkages in cellulose, lichenin and cereal beta-D-glucans.. Functionally, this enzyme catalyzes the endohydrolysis of 1,4-beta-glucosidic linkages in cellulose, lichenin and cereal beta-D-glucans. This chain is Endoglucanase D (celD), found in Acetivibrio thermocellus (strain ATCC 27405 / DSM 1237 / JCM 9322 / NBRC 103400 / NCIMB 10682 / NRRL B-4536 / VPI 7372) (Clostridium thermocellum).